The sequence spans 177 residues: Large ribosomal subunit protein uL5 (177 aa).

It belongs to the universal ribosomal protein uL5 family. In terms of assembly, part of the 50S ribosomal subunit; part of the 5S rRNA/L5/L18/L25 subcomplex. Contacts the 5S rRNA and the P site tRNA. Forms a bridge to the 30S subunit in the 70S ribosome.

Its function is as follows. This is one of the proteins that bind and probably mediate the attachment of the 5S RNA into the large ribosomal subunit, where it forms part of the central protuberance. In the 70S ribosome it contacts protein S13 of the 30S subunit (bridge B1b), connecting the 2 subunits; this bridge is implicated in subunit movement. Contacts the P site tRNA; the 5S rRNA and some of its associated proteins might help stabilize positioning of ribosome-bound tRNAs. The sequence is that of Large ribosomal subunit protein uL5 from Neorickettsia sennetsu (strain ATCC VR-367 / Miyayama) (Ehrlichia sennetsu).